The primary structure comprises 643 residues: 1-deoxy-D-xylulose-5-phosphate synthase (643 aa).

Residues H79 and 120–122 (AHA) contribute to the thiamine diphosphate site. D151 provides a ligand contact to Mg(2+). Residues 152-153 (GS), N180, Y287, and E369 each bind thiamine diphosphate. N180 contributes to the Mg(2+) binding site.

The protein belongs to the transketolase family. DXPS subfamily. In terms of assembly, homodimer. It depends on Mg(2+) as a cofactor. The cofactor is thiamine diphosphate.

The enzyme catalyses D-glyceraldehyde 3-phosphate + pyruvate + H(+) = 1-deoxy-D-xylulose 5-phosphate + CO2. It functions in the pathway metabolic intermediate biosynthesis; 1-deoxy-D-xylulose 5-phosphate biosynthesis; 1-deoxy-D-xylulose 5-phosphate from D-glyceraldehyde 3-phosphate and pyruvate: step 1/1. Its function is as follows. Catalyzes the acyloin condensation reaction between C atoms 2 and 3 of pyruvate and glyceraldehyde 3-phosphate to yield 1-deoxy-D-xylulose-5-phosphate (DXP). The protein is 1-deoxy-D-xylulose-5-phosphate synthase of Maricaulis maris (strain MCS10) (Caulobacter maris).